The chain runs to 846 residues: Vacuolar-sorting protein BRO1 (846 aa).

The BRO1 domain occupies 5 to 403 (SLSNLMLAIH…ERLQQASELT (399 aa)). A coiled-coil region spans residues 565-592 (LKQSLRQLENLGAQRAGLEDMLKEMKRK). The tract at residues 726–846 (SFQDHRSSGP…PHQGGGYYRQ (121 aa)) is disordered. Low complexity-rich tracts occupy residues 763 to 780 (APYY…YSIP) and 790 to 823 (TPHG…QGQQ). Over residues 824 to 836 (PRPPYPGQSPYQP) the composition is skewed to pro residues.

Homodimer. Interacts with AMSH3. Interacts with VPS32.1/SNF7B and VPS32.2/SNF7A. Interacts with ELC/VPS23A.

It localises to the cytoplasm. The protein resides in the late endosome. The protein localises to the endosome. Its subcellular location is the multivesicular body. In terms of biological role, class E VPS protein involved in concentration and sorting of cargo proteins of the multivesicular body (MVB) for incorporation into intralumenal vesicles. Fusion between endosomes and the vacuole will then target the cargo proteins to the vacuolar lumen. Associates with FREE1 and ELC to perform function in the ESCRT-I complex. Binds ubiquitin in vitro. Plays a role in the biogenesis of vacuole and multivesicular bodies (MVBs). Required for the endosomal location of AMSH3. Mediates high-affinity phosphate transporter trafficking to maintain phosphate homeostasis. Regulates vacuolar degradation of PHT1-1. The chain is Vacuolar-sorting protein BRO1 from Arabidopsis thaliana (Mouse-ear cress).